The chain runs to 276 residues: O-methyltransferase cnsE (276 aa).

Residues Q110, 133-134 (DA), and H155 contribute to the S-adenosyl-L-methionine site.

The protein belongs to the methyltransferase superfamily. S-adenosyl-L-methionine serves as cofactor.

The protein operates within alkaloid biosynthesis. Its function is as follows. O-methyltransferase; part of the gene cluster that mediates the biosynthesis of communesins, a prominent class of indole alkaloids with great potential as pharmaceuticals. Communesins are biosynthesized by the coupling of tryptamine and aurantioclavine, two building blocks derived from L-tryptophan. The L-tryptophan decarboxylase cnsB converts L-tryptophan to tryptamine, whereas the tryptophan dimethylallyltransferase cnsF converts L-tryptophan to 4-dimethylallyl tryptophan which is further transformed to aurantioclavine by the aurantioclavine synthase cnsA, probably aided by the catalase cnsD. The cytochrome P450 monooxygenase cnsC catalyzes the heterodimeric coupling between the two different indole moieties, tryptamine and aurantioclavine, to construct vicinal quaternary stereocenters and yield the heptacyclic communesin scaffold. The O-methyltransferase cnsE then methylates the communesin scaffold to produce communesin K, the simplest characterized communesin that contains the heptacyclic core. The dioxygenase cnsJ converts communesin K into communesin I. Acylation to introduce the hexadienyl group at position N16 of communesin I by the acyltransferase cnsK leads to the production of communesin B. The hexadienyl group is produced by the highly reducing polyketide synthase cnsI, before being hydrolytically removed from cnsI by the serine hydrolase cnsH, converted into hexadienyl-CoA by the CoA ligase cnsG, and then transferred to communesin I by cnsK. Surprisingly, cnsK may also be a promiscuous acyltransferase that can tolerate a range of acyl groups, including acetyl-, propionyl-, and butyryl-CoA, which lead to communesins A, G and H respectively. The roles of the alpha-ketoglutarate-dependent dioxygenases cnsM and cnsP have still to be determined. The chain is O-methyltransferase cnsE from Penicillium expansum (Blue mold rot fungus).